Consider the following 187-residue polypeptide: Adenine phosphoribosyltransferase (187 aa).

The protein belongs to the purine/pyrimidine phosphoribosyltransferase family. In terms of assembly, homodimer.

It localises to the cytoplasm. It catalyses the reaction AMP + diphosphate = 5-phospho-alpha-D-ribose 1-diphosphate + adenine. It participates in purine metabolism; AMP biosynthesis via salvage pathway; AMP from adenine: step 1/1. Catalyzes a salvage reaction resulting in the formation of AMP, that is energically less costly than de novo synthesis. The protein is Adenine phosphoribosyltransferase of Burkholderia pseudomallei (strain 668).